Consider the following 641-residue polypeptide: MAKVIGIDLGTTNSCVSVMDGKDAKVIENAEGARTTPSMVAFTEDGERLVGQPAKRQAVTNPENTLFAIKRLIGRTFEDPTTQKDKGMVPYKIVKADNGDAWVEAHDKSYSPSQISAMILQKMKETAESYLGEKVEKAVITVPAYFNDAQRQATKDAGKIAGLDVLRIINEPTAAALAYGLDKKEGKTIAVYDLGGGTFDISVLEIGDGVFEVKSTNGDTFLGGEDFDMRLVEYLASEFKKEQGIDLKNDKLALQRLKEAAEKAKIELSSSQQTEINLPFITADASGPKHLTMKLSRAKFESLVDDLIQKTIAPCKAALKDAGVSAAEIDEVVLVGGMTRMPKVQETVKQLFGKEPHKGVNPDEVVAMGAAIQAGVLQGDVKDVLLLDVTPLSLGIETLGGVFTRLIERNTTIPTKKSQVFSTADDNQSAVTIRVSQGEREMAADNKLLGQFDLVGIPPAPRGVPQIEVTFDIDANGIVQVSAKDKGTGKEHQIRIQASGGLSDAEIEKMVKDAEANAEADKKRREGVEAKNQAESLVHSSEKSLQEHGDKVSETDRKAIEDAIAALKSAVEASEPDAEDIKAKTNTLMEVSMKLGQAIYEAQQTESAHADAAADAKRSGDDVVDADYEEVKDEDDRKRSA.

Thr-198 is subject to Phosphothreonine; by autocatalysis. Composition is skewed to basic and acidic residues over residues 514 to 529 (AEANAEADKKRREGVE), 540 to 554 (SSEKSLQEHGDKVSE), and 608 to 621 (AHADAAADAKRSGD). 2 disordered regions span residues 514–554 (AEAN…KVSE) and 604–641 (QTESAHADAAADAKRSGDDVVDADYEEVKDEDDRKRSA). Residues 622 to 633 (DVVDADYEEVKD) show a composition bias toward acidic residues.

Belongs to the heat shock protein 70 family.

Its function is as follows. Acts as a chaperone. This chain is Chaperone protein DnaK, found in Sinorhizobium medicae (strain WSM419) (Ensifer medicae).